Reading from the N-terminus, the 37-residue chain is Large ribosomal subunit protein bL36 (37 aa).

It belongs to the bacterial ribosomal protein bL36 family.

This Heliobacterium modesticaldum (strain ATCC 51547 / Ice1) protein is Large ribosomal subunit protein bL36.